A 300-amino-acid polypeptide reads, in one-letter code: Acetyl-coenzyme A carboxylase carboxyl transferase subunit beta 1 (300 aa).

A CoA carboxyltransferase N-terminal domain is found at 26 to 294 (MWVKCPSCGD…HTSAAQHVPA (269 aa)). Residues Cys30, Cys33, Cys49, and Cys51 each coordinate Zn(2+). A C4-type zinc finger spans residues 30-51 (CPSCGDLIYTRQFSDNLKVCKC).

The protein belongs to the AccD/PCCB family. Acetyl-CoA carboxylase is a heterohexamer composed of biotin carboxyl carrier protein (AccB), biotin carboxylase (AccC) and two subunits each of ACCase subunit alpha (AccA) and ACCase subunit beta (AccD). The cofactor is Zn(2+).

The protein localises to the cytoplasm. The enzyme catalyses N(6)-carboxybiotinyl-L-lysyl-[protein] + acetyl-CoA = N(6)-biotinyl-L-lysyl-[protein] + malonyl-CoA. It participates in lipid metabolism; malonyl-CoA biosynthesis; malonyl-CoA from acetyl-CoA: step 1/1. Its function is as follows. Component of the acetyl coenzyme A carboxylase (ACC) complex. Biotin carboxylase (BC) catalyzes the carboxylation of biotin on its carrier protein (BCCP) and then the CO(2) group is transferred by the transcarboxylase to acetyl-CoA to form malonyl-CoA. In Roseiflexus sp. (strain RS-1), this protein is Acetyl-coenzyme A carboxylase carboxyl transferase subunit beta 1.